Consider the following 164-residue polypeptide: Hydroxylaminobenzene mutase HabB (164 aa).

4 helical membrane passes run 16–36 (LLQL…LLPM), 50–70 (GVLN…LSLG), 78–98 (FGFA…AGFW), and 121–141 (LIAF…ALAL).

It is found in the cell membrane. The enzyme catalyses N-phenylhydroxylamine = 2-aminophenol. With respect to regulation, addition of ZnSO(4) decreases the activity to 70%. In terms of biological role, catalyzes the rearrangement of hydroxylaminobenzene to 2-aminophenol. In Ectopseudomonas oleovorans (Pseudomonas oleovorans), this protein is Hydroxylaminobenzene mutase HabB (habB).